Consider the following 215-residue polypeptide: Adenylate kinase (215 aa).

Residue 10–15 coordinates ATP; the sequence is GAGKGT. The tract at residues 30 to 59 is NMP; that stretch reads STGDILRDAVSKGTELGKMAKAIMDRGELV. AMP is bound by residues T31, R36, 57-59, 82-85, and Q89; these read ELV and GYPR. The tract at residues 123–160 is LID; it reads NRRVCPNCGKVYNLITLQPKEDEKCDVCGTKLIQRDDD. R124 is an ATP binding site. Residues C127 and C130 each contribute to the Zn(2+) site. 133–134 is a binding site for ATP; it reads VY. Residues C147 and C150 each contribute to the Zn(2+) site. The AMP site is built by R157 and R168. Q196 is a binding site for ATP.

Belongs to the adenylate kinase family. Monomer.

It localises to the cytoplasm. The catalysed reaction is AMP + ATP = 2 ADP. It functions in the pathway purine metabolism; AMP biosynthesis via salvage pathway; AMP from ADP: step 1/1. Catalyzes the reversible transfer of the terminal phosphate group between ATP and AMP. Plays an important role in cellular energy homeostasis and in adenine nucleotide metabolism. This is Adenylate kinase from Petrotoga mobilis (strain DSM 10674 / SJ95).